Reading from the N-terminus, the 270-residue chain is Phosphatidylinositol transfer protein alpha isoform (270 aa).

6 residues coordinate a 1,2-diacyl-sn-glycero-3-phospho-(1D-myo-inositol): Thr-58, Lys-60, Glu-85, Asn-89, Thr-96, and Lys-194. Lys-215 bears the N6-acetyllysine mark. The segment covering 250-263 has biased composition (basic and acidic residues); sequence TKRQLDEMRQKDPV. The segment at 250–270 is disordered; sequence TKRQLDEMRQKDPVKGMTADD.

Belongs to the PtdIns transfer protein family. PI transfer class I subfamily. Phosphorylated by PKC in a calcium and phosphatidylserine-dependent manner.

It is found in the cytoplasm. Its subcellular location is the nucleus. It carries out the reaction a 1,2-diacyl-sn-glycero-3-phosphocholine(in) = a 1,2-diacyl-sn-glycero-3-phosphocholine(out). It catalyses the reaction a 1,2-diacyl-sn-glycero-3-phospho-(1D-myo-inositol)(in) = a 1,2-diacyl-sn-glycero-3-phospho-(1D-myo-inositol)(out). Functionally, catalyzes the transfer of phosphatidylinositol (PI) and phosphatidylcholine (PC) between membranes. Shows a preference for PI and PC containing shorter saturated or monosaturated acyl chains at the sn-1 and sn-2 positions. Preference order for PC is C16:1 &gt; C16:0 &gt; C18:1 &gt; C18:0 &gt; C20:4 and for PI is C16:1 &gt; C16:0 &gt; C18:1 &gt; C18:0 &gt; C20:4 &gt; C20:3. In Oryctolagus cuniculus (Rabbit), this protein is Phosphatidylinositol transfer protein alpha isoform (PITPNA).